Consider the following 342-residue polypeptide: tRNA-specific 2-thiouridylase MnmA (342 aa).

Residues G6–S13 and L32 each bind ATP. The active-site Nucleophile is C99. C99 and C190 are oxidised to a cystine. G124 is an ATP binding site. Positions K140–Q142 are interaction with tRNA. C190 (cysteine persulfide intermediate) is an active-site residue. The interval R292 to Y293 is interaction with tRNA.

It belongs to the MnmA/TRMU family.

Its subcellular location is the cytoplasm. It carries out the reaction S-sulfanyl-L-cysteinyl-[protein] + uridine(34) in tRNA + AH2 + ATP = 2-thiouridine(34) in tRNA + L-cysteinyl-[protein] + A + AMP + diphosphate + H(+). Functionally, catalyzes the 2-thiolation of uridine at the wobble position (U34) of tRNA, leading to the formation of s(2)U34. This chain is tRNA-specific 2-thiouridylase MnmA, found in Hydrogenobaculum sp. (strain Y04AAS1).